The chain runs to 193 residues: Acyl carrier protein phosphodiesterase (193 aa).

The protein belongs to the AcpH family.

The catalysed reaction is holo-[ACP] + H2O = apo-[ACP] + (R)-4'-phosphopantetheine + H(+). Converts holo-ACP to apo-ACP by hydrolytic cleavage of the phosphopantetheine prosthetic group from ACP. In Yersinia enterocolitica serotype O:8 / biotype 1B (strain NCTC 13174 / 8081), this protein is Acyl carrier protein phosphodiesterase.